A 205-amino-acid polypeptide reads, in one-letter code: ATP phosphoribosyltransferase (205 aa).

The protein belongs to the ATP phosphoribosyltransferase family. Short subfamily. In terms of assembly, heteromultimer composed of HisG and HisZ subunits.

It localises to the cytoplasm. It carries out the reaction 1-(5-phospho-beta-D-ribosyl)-ATP + diphosphate = 5-phospho-alpha-D-ribose 1-diphosphate + ATP. It participates in amino-acid biosynthesis; L-histidine biosynthesis; L-histidine from 5-phospho-alpha-D-ribose 1-diphosphate: step 1/9. In terms of biological role, catalyzes the condensation of ATP and 5-phosphoribose 1-diphosphate to form N'-(5'-phosphoribosyl)-ATP (PR-ATP). Has a crucial role in the pathway because the rate of histidine biosynthesis seems to be controlled primarily by regulation of HisG enzymatic activity. The sequence is that of ATP phosphoribosyltransferase from Helicobacter hepaticus (strain ATCC 51449 / 3B1).